The sequence spans 526 residues: WRKY transcription factor 72A (526 aa).

2 stretches are compositionally biased toward basic and acidic residues: residues 40 to 52 (KERK…DDNS) and 60 to 76 (LTGD…KADM). Disordered regions lie at residues 40-76 (KERK…KADM) and 170-200 (SSTK…QTWP). Positions 62–106 (GDKKDDQLESAKADMEEVMEENQRLKKHLDKIMKDYRNLQMQFHE) form a coiled coil. Low complexity predominate over residues 170–185 (SSTKSSPSNLSPENSL). Positions 232 to 298 (CDTPTMNDGC…YEGTHNHPLP (67 aa)) form a DNA-binding region, WRKY.

The protein belongs to the WRKY group II-b family. Expressed in roots, trichomes and fruits.

The protein resides in the nucleus. Transcription activator involved in the transcriptional regulation of terpene biosynthesis in glandular trichomes. Binds to the promoter of the linalool synthase TPS5 and promotes TPS5 gene transactivation. In association with WRKY72B, contributes to basal defense against root-knot nematodes (RKNs) and potato aphids, as well as Mi-1-mediated gene-for-gene resistance to these pests. Both WRKY72A and WRKY72B are not required for gene-for-gene resistance mediated by Pto, another tomato R gene. This Solanum lycopersicum (Tomato) protein is WRKY transcription factor 72A.